The primary structure comprises 189 residues: Interferon alpha-5 (189 aa).

An N-terminal signal peptide occupies residues 1 to 23; that stretch reads MARLCAFLMVLPVLSYWPTCSLG. Disulfide bonds link C24-C122 and C52-C162. The N-linked (GlcNAc...) asparagine glycan is linked to N101.

It belongs to the alpha/beta interferon family.

It is found in the secreted. Its function is as follows. Produced by macrophages, IFN-alpha have antiviral activities. Interferon stimulates the production of two enzymes: a protein kinase and an oligoadenylate synthetase. The protein is Interferon alpha-5 (Ifna5) of Mus musculus (Mouse).